The chain runs to 288 residues: ATP synthase gamma chain (288 aa).

Belongs to the ATPase gamma chain family. In terms of assembly, F-type ATPases have 2 components, CF(1) - the catalytic core - and CF(0) - the membrane proton channel. CF(1) has five subunits: alpha(3), beta(3), gamma(1), delta(1), epsilon(1). CF(0) has three main subunits: a, b and c.

The protein resides in the cell inner membrane. Produces ATP from ADP in the presence of a proton gradient across the membrane. The gamma chain is believed to be important in regulating ATPase activity and the flow of protons through the CF(0) complex. This Acidovorax ebreus (strain TPSY) (Diaphorobacter sp. (strain TPSY)) protein is ATP synthase gamma chain.